Here is a 276-residue protein sequence, read N- to C-terminus: Large ribosomal subunit protein uL2 (276 aa).

Residues 221 to 276 (RGSAMNPNDHPHGGGEGRAPIGRKSPMTPWGKKARGVKTRDRKKASNALIIRRRTK) are disordered. Residues 252-276 (KKARGVKTRDRKKASNALIIRRRTK) are compositionally biased toward basic residues.

The protein belongs to the universal ribosomal protein uL2 family. Part of the 50S ribosomal subunit. Forms a bridge to the 30S subunit in the 70S ribosome.

Functionally, one of the primary rRNA binding proteins. Required for association of the 30S and 50S subunits to form the 70S ribosome, for tRNA binding and peptide bond formation. It has been suggested to have peptidyltransferase activity; this is somewhat controversial. Makes several contacts with the 16S rRNA in the 70S ribosome. In Aster yellows phytoplasma, this protein is Large ribosomal subunit protein uL2.